Here is an 853-residue protein sequence, read N- to C-terminus: Cytochrome P450 monooxygenase mpaDE' (853 aa).

Residues 1–6 lie on the Lumenal side of the membrane; sequence MESLSL. The helical transmembrane segment at 7–29 threads the bilayer; sequence TWITAIAVVLYLVQRYVRSYWRL. The Cytoplasmic segment spans residues 30–853; that stretch reads KDIPGPVLAK…DIENAIEGQK (824 aa). Heme is bound at residue C449.

Belongs to the cytochrome P450 family. It depends on heme as a cofactor.

Its subcellular location is the endoplasmic reticulum membrane. The catalysed reaction is 5-methylorsellinate + reduced [NADPH--hemoprotein reductase] + O2 = 4,6-dihydroxy-2-(hydroxymethyl)-3-methylbenzoate + oxidized [NADPH--hemoprotein reductase] + H2O + H(+). The enzyme catalyses 4,6-dihydroxy-2-(hydroxymethyl)-3-methylbenzoate + H(+) = 5,7-dihydroxy-4-methylphthalide + H2O. It functions in the pathway secondary metabolite biosynthesis; terpenoid biosynthesis. Functionally, cytochrome P450 monooxygenase; part of the gene cluster that mediates the biosynthesis of mycophenolic acid (MPA), the first isolated antibiotic natural product in the world obtained from a culture of Penicillium brevicompactum in 1893. MpaDE' is an endoplasmic reticulum-bound enzyme that catalyzes the conversion of 5-methylorsellinic acid (5MOA) into the phthalide compound 5,7-dihydroxy-4,6-dimethylphthalide (DHMP). MpaDE' first catalyzes hydroxylation of 5-MOA to 4,6-dihydroxy-2-(hydroxymethyl)-3-methylbenzoic acid (DHMB), and then acts as a lactone synthase that catalyzes the ring closure to convert DHMB into DHMP. The first step of the pathway is the synthesis of 5-methylorsellinic acid (5MOA) by the cytosolic polyketide synthase mpaC. 5MOA is then converted to the phthalide compound 5,7-dihydroxy-4,6-dimethylphthalide (DHMP) by the endoplasmic reticulum-bound cytochrome P450 monooxygenase mpaDE. MpaDE first catalyzes hydroxylation of 5-MOA to 4,6-dihydroxy-2-(hydroxymethyl)-3-methylbenzoic acid (DHMB). MpaDE then acts as a lactone synthase that catalyzes the ring closure to convert DHMB into DHMP. The next step is the prenylation of DHMP by the Golgi apparatus-associated prenyltransferase mpaA to yield farnesyl-DHMP (FDHMP). The ER-bound oxygenase mpaB then mediates the oxidative cleavage the C19-C20 double bond in FDHMP to yield FDHMP-3C via a mycophenolic aldehyde intermediate. The O-methyltransferase mpaG catalyzes the methylation of FDHMP-3C to yield MFDHMP-3C. After the cytosolic methylation of FDHMP-3C, MFDHMP-3C enters into peroxisomes probably via free diffusion due to its low molecular weight. Upon a peroxisomal CoA ligation reaction, catalyzed by a beta-oxidation component enzyme acyl-CoA ligase ACL891, MFDHMP-3C-CoA would then be restricted to peroxisomes for the following beta-oxidation pathway steps. The peroxisomal beta-oxidation machinery than converts MFDHMP-3C-CoA into MPA_CoA, via a beta-oxidation chain-shortening process. Finally mpaH acts as a peroxisomal acyl-CoA hydrolase with high substrate specificity toward MPA-CoA to release the final product MPA. The polypeptide is Cytochrome P450 monooxygenase mpaDE' (Penicillium brevicompactum).